The sequence spans 434 residues: Probable exopolygalacturonase A (434 aa).

Residues 1–19 (MKLPILVTLFITLPALCVS) form the signal peptide. N-linked (GlcNAc...) asparagine glycosylation is found at asparagine 46, asparagine 57, asparagine 106, asparagine 199, and asparagine 207. Residues 232–253 (SSNIVIQDSRIVNTDDCVSFKP) form a PbH1 1 repeat. Aspartate 246 serves as the catalytic Proton donor. Cysteine 248 and cysteine 265 are disulfide-bonded. N-linked (GlcNAc...) asparagine glycosylation is present at asparagine 254. A PbH1 2 repeat occupies 255–275 (STQIVIQNLDCTGSHGISVGS). The active site involves histidine 269. N-linked (GlcNAc...) asparagine glycans are attached at residues asparagine 293, asparagine 329, and asparagine 354. Cysteine 392 and cysteine 398 form a disulfide bridge. N-linked (GlcNAc...) asparagine glycosylation occurs at asparagine 400.

The protein belongs to the glycosyl hydrolase 28 family.

It localises to the secreted. It carries out the reaction [(1-&gt;4)-alpha-D-galacturonosyl](n) + H2O = alpha-D-galacturonate + [(1-&gt;4)-alpha-D-galacturonosyl](n-1). Its function is as follows. Specific in hydrolyzing the terminal glycosidic bond of polygalacturonic acid and oligogalacturonates. In Aspergillus niger (strain ATCC MYA-4892 / CBS 513.88 / FGSC A1513), this protein is Probable exopolygalacturonase A (pgxA).